A 1362-amino-acid chain; its full sequence is Bromodomain-containing protein 4 (1362 aa).

Residues 1 to 58 are disordered; that stretch reads MSAESGPGTRLRNLPVMGDGLETSQMSTTQAQAQPQPANAASTNPPPPETSNPNKPKR. The segment covering 23–43 has biased composition (low complexity); sequence TSQMSTTQAQAQPQPANAAST. The region spanning 58 to 164 is the Bromo 1 domain; the sequence is RQTNQLQYLL…KLFLQKINEL (107 aa). Lys-99 is covalently cross-linked (Glycyl lysine isopeptide (Lys-Gly) (interchain with G-Cter in SUMO2)). 3 disordered regions span residues 174–229, 242–352, and 463–615; these read VQAK…PAVT, VPPQ…KVSE, and EPVV…YEEK. A compositionally biased stretch (low complexity) spans 197–211; it reads PNTTQASTPPQTQTP. Composition is skewed to pro residues over residues 212-227 and 243-266; these read QPNP…PFPA and PPQP…PAPQ. A compositionally biased stretch (basic and acidic residues) spans 320-336; the sequence is QRRESSRPVKPPKKDVP. The 110-residue stretch at 348–457 folds into the Bromo 2 domain; it reads SKVSEQLKCC…DVFEMRFAKM (110 aa). Ser-470 is modified (phosphoserine). Residues 478–497 are compositionally biased toward low complexity; sequence KVVAPPSSSDSSSDSSSDSD. A phosphoserine; by CK2 mark is found at Ser-484, Ser-488, Ser-492, Ser-494, Ser-498, Ser-499, and Ser-503. Positions 484–503 are NPS region; that stretch reads SSSDSSSDSSSDSDSSTDDS. The tract at residues 524–579 is BID region; that stretch reads QLAALSQPQQNKPKKKEKDKKEKKKEKHKRKEEVEENKKSKAKEPPPKKTKKNNSS. A compositionally biased stretch (basic residues) spans 535 to 553; the sequence is KPKKKEKDKKEKKKEKHKR. The span at 554 to 570 shows a compositional bias: basic and acidic residues; sequence KEEVEENKKSKAKEPPP. Residue Lys-585 forms a Glycyl lysine isopeptide (Lys-Gly) (interchain with G-Cter in SUMO2) linkage. Positions 600-682 constitute an NET domain; it reads ESEEEDKCKP…SCLRKKRKPQ (83 aa). A Phosphoserine modification is found at Ser-601. Basic and acidic residues predominate over residues 605 to 615; it reads DKCKPMSYEEK. Glycyl lysine isopeptide (Lys-Gly) (interchain with G-Cter in SUMO2) cross-links involve residues Lys-645 and Lys-694. The interval 674 to 1100 is disordered; the sequence is CLRKKRKPQA…PKKQELRAAS (427 aa). A compositionally biased stretch (low complexity) spans 699–712; that stretch reads SSSESESSSESSSS. Over residues 724 to 744 the composition is skewed to basic residues; sequence KSKKKGHPGREQKKHHHHHHQ. Composition is skewed to pro residues over residues 751 to 785, 833 to 846, and 881 to 890; these read APVP…PPSM, PELP…PEHS, and PPKPARPPAV. Residues 926–936 are compositionally biased toward low complexity; sequence MQMQLYLQQLQ. 3 stretches are compositionally biased toward pro residues: residues 953 to 964, 973 to 996, and 1010 to 1034; these read QPPPPLPPPPHP, QPPP…PPRP, and QPPP…PQPA. A compositionally biased stretch (basic residues) spans 1041-1050; the sequence is QHHHSPRHHK. Residues 1047–1362 are C-terminal (CTD) region; that stretch reads RHHKSDPYST…LLSIFEENLF (316 aa). Residue Lys-1050 forms a Glycyl lysine isopeptide (Lys-Gly) (interchain with G-Cter in SUMO2) linkage. Over residues 1071 to 1091 the composition is skewed to polar residues; the sequence is PQMSQFQSLTHQSPPQQNVQP. Lys-1111 carries the N6-acetyllysine; alternate modification. A Glycyl lysine isopeptide (Lys-Gly) (interchain with G-Cter in SUMO1); alternate cross-link involves residue Lys-1111. A Glycyl lysine isopeptide (Lys-Gly) (interchain with G-Cter in SUMO2); alternate cross-link involves residue Lys-1111. The segment at 1116–1339 is disordered; it reads HSPIIRSEPF…KREQERRRRE (224 aa). Phosphoserine occurs at positions 1117 and 1126. The segment covering 1175 to 1196 has biased composition (basic and acidic residues); sequence PDKDKQKQEPKTPVAPKKDLKI. Lys-1197 participates in a covalent cross-link: Glycyl lysine isopeptide (Lys-Gly) (interchain with G-Cter in SUMO2). 2 positions are modified to phosphoserine: Ser-1201 and Ser-1204. Low complexity predominate over residues 1211 to 1223; the sequence is TTPSSTAKSSSDS. Residues 1225–1284 are compositionally biased toward basic and acidic residues; that stretch reads EQFRRAAREKEEREKALKAQAEHAEKEKERLRQERMRSREDEDALEQARRAHEEARRRQE. Low complexity predominate over residues 1285–1313; that stretch reads QQQQQRQEQQQQQQQQAAAVAAAATPQAQ. A compositionally biased stretch (basic and acidic residues) spans 1323–1339; that stretch reads QQRELARKREQERRRRE.

The protein belongs to the BET family. As to quaternary structure, interacts with p53/TP53; the interaction is direct. Interacts (via CTD region) with CDK9 and CCNT1, acting as an associated component of P-TEFb complex. Interacts with RELA (when acetylated at 'Lys-310'). Interacts (via NET domain) with NSD3, CHD4, BICRA and ATAD5. The interaction with BICRA bridges BRD4 to the GBAF complex. Interacts (via NET domain) with JMJD6 (via JmjC and N-terminal domains); the interaction is stronger in presence of ssRNA and recruits JMJD6 on distal enhancers. Interacts with NSD3. Interacts with NIPBL. Interacts with SMC2. Interacts with NCAPD3. In terms of assembly, (Microbial infection) Interacts with bovine papillomavirus type 1 regulatory protein E2. This interactions may serve for the tethering of viral genomes to host mitotic chromosomes allowing successful partitioning of the viral genome during cell division. As to quaternary structure, (Microbial infection) Interacts with Epstein-Barr virus (EBV) protein EBNA1; this interaction facilitates transcriptional activation by EBNA1. (Microbial infection) Interacts with human herpes virus-8 (HHV-8) protein LANA. In terms of processing, phosphorylation by CK2 disrupt the intramolecular binding between the bromo domain 2 and the NPS region and promotes binding between the NPS and the BID regions, leading to activate the protein and promote binding to acetylated histones. In absence of phosphorylation, BRD4 does not localize to p53/TP53 target gene promoters, phosphorylation promoting recruitment to p53/TP53 target promoters. As to expression, ubiquitously expressed.

The protein localises to the nucleus. Its subcellular location is the chromosome. With respect to regulation, inhibited by JQ1, a thieno-triazolo-1,4-diazepine derivative, which specifically inhibits members of the BET family (BRD2, BRD3 and BRD4). The first bromo domain is inhibited by GSK778 (iBET-BD1), which specifically inhibits the first bromo domain of members of the BET family (BRD2, BRD3 and BRD4). The second bromo domain is inhibited by ABBV-744, which specifically inhibits the second bromo domain of members of the BET family (BRD2, BRD3 and BRD4). The second bromo domain is inhibited by GSK046 (iBET-BD2), which specifically inhibits the second bromo domain of members of the BET family (BRD2, BRD3 and BRD4). Functionally, chromatin reader protein that recognizes and binds acetylated histones and plays a key role in transmission of epigenetic memory across cell divisions and transcription regulation. Remains associated with acetylated chromatin throughout the entire cell cycle and provides epigenetic memory for postmitotic G1 gene transcription by preserving acetylated chromatin status and maintaining high-order chromatin structure. During interphase, plays a key role in regulating the transcription of signal-inducible genes by associating with the P-TEFb complex and recruiting it to promoters. Also recruits P-TEFb complex to distal enhancers, so called anti-pause enhancers in collaboration with JMJD6. BRD4 and JMJD6 are required to form the transcriptionally active P-TEFb complex by displacing negative regulators such as HEXIM1 and 7SKsnRNA complex from P-TEFb, thereby transforming it into an active form that can then phosphorylate the C-terminal domain (CTD) of RNA polymerase II. Regulates differentiation of naive CD4(+) T-cells into T-helper Th17 by promoting recruitment of P-TEFb to promoters. Promotes phosphorylation of 'Ser-2' of the C-terminal domain (CTD) of RNA polymerase II. According to a report, directly acts as an atypical protein kinase and mediates phosphorylation of 'Ser-2' of the C-terminal domain (CTD) of RNA polymerase II; these data however need additional evidences in vivo. In addition to acetylated histones, also recognizes and binds acetylated RELA, leading to further recruitment of the P-TEFb complex and subsequent activation of NF-kappa-B. Also acts as a regulator of p53/TP53-mediated transcription: following phosphorylation by CK2, recruited to p53/TP53 specific target promoters. Its function is as follows. Acts as a chromatin insulator in the DNA damage response pathway. Inhibits DNA damage response signaling by recruiting the condensin-2 complex to acetylated histones, leading to chromatin structure remodeling, insulating the region from DNA damage response by limiting spreading of histone H2AX/H2A.x phosphorylation. This Homo sapiens (Human) protein is Bromodomain-containing protein 4 (BRD4).